The following is a 552-amino-acid chain: Hyaluronan synthase 2 (552 aa).

The Cytoplasmic portion of the chain corresponds to 1–11 (MHCERFLCVLR). Residues 12–32 (IIGTTLFGVSLLLGITAAYIV) form a helical membrane-spanning segment. Over 33-45 (GYQFIQTDNYYFS) the chain is Extracellular. A helical membrane pass occupies residues 46-66 (FGLYGAFLASHLIIQSLFAFL). Residues 67–374 (EHRKMKKSLE…NAMWFHKHHL (308 aa)) lie on the Cytoplasmic side of the membrane. A Phosphothreonine modification is found at Thr-110. A Glycyl lysine isopeptide (Lys-Gly) (interchain with G-Cter in ubiquitin) cross-link involves residue Lys-190. Ser-221 is a glycosylation site (O-linked (GlcNAc) serine). Position 328 is a phosphothreonine (Thr-328). The chain crosses the membrane as a helical span at residues 375 to 395 (WMTYEAVITGFFPFFLIATVI). The Extracellular portion of the chain corresponds to 396–402 (QLFYRGK). Residues 403 to 423 (IWNILLFLLTVQLVGLIKSSF) traverse the membrane as a helical segment. The Cytoplasmic portion of the chain corresponds to 424 to 429 (ASCLRG). Residues 430-450 (NIVMVFMSLYSVLYMSSLLPA) traverse the membrane as a helical segment. The Extracellular portion of the chain corresponds to 451-475 (KMFAIATINKAGWGTSGRKTIVVNF). The helical transmembrane segment at 476–496 (IGLIPVSVWFTILLGGVIFTI) threads the bilayer. Over 497–510 (YKESKKPFSESKQT) the chain is Cytoplasmic. The chain crosses the membrane as a helical span at residues 511 to 531 (VLIVGTLIYACYWVVLLTLYV). Topologically, residues 532 to 552 (VLINKCGRRKKGQQYDMVLDV) are extracellular.

It belongs to the NodC/HAS family. Homodimer; dimerization promotes enzymatic activity. Forms heterodimer with HAS3. Forms heterodimer with HAS1. Requires Mg(2+) as cofactor. Post-translationally, phosphorylation at Thr-328 is essential for hyaluronan synthase activity. In terms of processing, O-GlcNAcylation at Ser-221 increases the stability of HAS2 and plasma membrane localization. Ubiquitination at Lys-190; this ubiquitination is essential for hyaluronan synthase activity and homo- or hetero-oligomerization. Can also be poly-ubiquitinated. Deubiquitinated by USP17L22/USP17 and USP4. USP17L22/USP17 efficiently removes 'Lys-63'- and 'Lys-48'-linked polyubiquitin chains, whereas USP4 preferentially removes monoubiquitination and, partially, both 'Lys-63'- and 'Lys-48'-linked polyubiquitin chain.

The protein localises to the cell membrane. The protein resides in the endoplasmic reticulum membrane. It is found in the vesicle. It localises to the golgi apparatus membrane. Its subcellular location is the lysosome. It catalyses the reaction [hyaluronan](n) + UDP-N-acetyl-alpha-D-glucosamine = N-acetyl-beta-D-glucosaminyl-(1-&gt;4)-[hyaluronan](n) + UDP + H(+). It carries out the reaction N-acetyl-beta-D-glucosaminyl-(1-&gt;4)-[hyaluronan](n) + UDP-alpha-D-glucuronate = [hyaluronan](n+1) + UDP + H(+). It participates in glycan biosynthesis; hyaluronan biosynthesis. Its function is as follows. Catalyzes the addition of GlcNAc or GlcUA monosaccharides to the nascent hyaluronan polymer. Therefore, it is essential to hyaluronan synthesis a major component of most extracellular matrices that has a structural role in tissues architectures and regulates cell adhesion, migration and differentiation. This is one of three isoenzymes responsible for cellular hyaluronan synthesis and it is particularly responsible for the synthesis of high molecular mass hyaluronan. In Rattus norvegicus (Rat), this protein is Hyaluronan synthase 2 (Has2).